The primary structure comprises 309 residues: uncharacterized protein (309 aa).

This sequence belongs to the OprB family.

This is an uncharacterized protein from Aquifex aeolicus (strain VF5).